The sequence spans 450 residues: ATP-dependent protease ATPase subunit HslU (450 aa).

Residues Val-29, 71–76, Asp-261, Glu-328, and Arg-400 each bind ATP; that span reads GVGKTE.

This sequence belongs to the ClpX chaperone family. HslU subfamily. In terms of assembly, a double ring-shaped homohexamer of HslV is capped on each side by a ring-shaped HslU homohexamer. The assembly of the HslU/HslV complex is dependent on binding of ATP.

The protein resides in the cytoplasm. In terms of biological role, ATPase subunit of a proteasome-like degradation complex; this subunit has chaperone activity. The binding of ATP and its subsequent hydrolysis by HslU are essential for unfolding of protein substrates subsequently hydrolyzed by HslV. HslU recognizes the N-terminal part of its protein substrates and unfolds these before they are guided to HslV for hydrolysis. This chain is ATP-dependent protease ATPase subunit HslU, found in Rickettsia felis (strain ATCC VR-1525 / URRWXCal2) (Rickettsia azadi).